The sequence spans 362 residues: Anthranilate phosphoribosyltransferase 2 (362 aa).

5-phospho-alpha-D-ribose 1-diphosphate contacts are provided by residues Gly103, 106–107, Thr111, 113–116, 131–139, and Ser143; these read GD, NIST, and KHGNRSASS. Residue Gly103 participates in anthranilate binding. Position 115 (Ser115) interacts with Mg(2+). Anthranilate is bound at residue Asn134. Arg189 contacts anthranilate. Mg(2+)-binding residues include Asp248 and Glu249.

It belongs to the anthranilate phosphoribosyltransferase family. Homodimer. Mg(2+) is required as a cofactor.

It catalyses the reaction N-(5-phospho-beta-D-ribosyl)anthranilate + diphosphate = 5-phospho-alpha-D-ribose 1-diphosphate + anthranilate. It participates in amino-acid biosynthesis; L-tryptophan biosynthesis; L-tryptophan from chorismate: step 2/5. Functionally, catalyzes the transfer of the phosphoribosyl group of 5-phosphorylribose-1-pyrophosphate (PRPP) to anthranilate to yield N-(5'-phosphoribosyl)-anthranilate (PRA). The sequence is that of Anthranilate phosphoribosyltransferase 2 from Nostoc sp. (strain PCC 7120 / SAG 25.82 / UTEX 2576).